The following is a 161-amino-acid chain: Troponin C, slow skeletal and cardiac muscles (161 aa).

Met1 is modified (N-acetylmethionine). EF-hand domains lie at 16–51 (QKNEFKAAFDIFVLGAEDGCISTKELGKVMRMLGQN), 52–87 (PTPEELQEMIDEVDEDGSGTVDFDEFLVMMVRCMKD), 92–127 (KSEEELSDLFRMFDKNADGYIDLDELKIMLQATGET), and 128–161 (ITEDDIEELMKDGDKNNDGRIDYDEFLEFMKGVE). Positions 65, 67, 69, 71, and 76 each coordinate Ca(2+). Position 98 is a phosphoserine (Ser98). Residues Asp105, Asn107, Asp109, Tyr111, Glu116, Asp141, Asn143, Asp145, Arg147, and Glu152 each coordinate Ca(2+).

The protein belongs to the troponin C family.

In terms of biological role, troponin is the central regulatory protein of striated muscle contraction. Tn consists of three components: Tn-I which is the inhibitor of actomyosin ATPase, Tn-T which contains the binding site for tropomyosin and Tn-C. The binding of calcium to Tn-C abolishes the inhibitory action of Tn on actin filaments. The polypeptide is Troponin C, slow skeletal and cardiac muscles (TNNC1) (Homo sapiens (Human)).